The primary structure comprises 396 residues: Elongation factor Tu (396 aa).

Residues 10 to 206 (KPHCNIGTIG…AVDAYIPQPE (197 aa)) enclose the tr-type G domain. Positions 19–26 (GHVDHGKT) are G1. Residue 19 to 26 (GHVDHGKT) participates in GTP binding. A Mg(2+)-binding site is contributed by threonine 26. The interval 60–64 (GITIS) is G2. Residues 81 to 84 (DCPG) form a G3 region. GTP-binding positions include 81–85 (DCPGH) and 136–139 (NKCD). A G4 region spans residues 136–139 (NKCD). The segment at 174-176 (SAL) is G5.

The protein belongs to the TRAFAC class translation factor GTPase superfamily. Classic translation factor GTPase family. EF-Tu/EF-1A subfamily. As to quaternary structure, monomer.

It is found in the cytoplasm. The catalysed reaction is GTP + H2O = GDP + phosphate + H(+). Its function is as follows. GTP hydrolase that promotes the GTP-dependent binding of aminoacyl-tRNA to the A-site of ribosomes during protein biosynthesis. The sequence is that of Elongation factor Tu from Nitrobacter hamburgensis (strain DSM 10229 / NCIMB 13809 / X14).